The primary structure comprises 474 residues: Viral protein TPX (474 aa).

The tract at residues 268–474 (VTVTPISSPS…TPTSTTSSNI (207 aa)) is disordered. A compositionally biased stretch (pro residues) spans 275–365 (SPSPTPTPTP…PTPTPTPTPT (91 aa)). The stretch at 278 to 367 (PTPTPTPTPT…PTPTPTPTPT (90 aa)) is one Thr-Pro(N) repeat. The tract at residues 278 to 467 (PTPTPTPTPT…PTPTPTPTPT (190 aa)) is 3 Thr-Pro repeats regions and two near identical repeats. A repeat spans 368–377 (YDITYVVFDV). One copy of the Thr-Pro(N) repeat lies at 378 to 436 (TPSPTPTPTPTPTPTPTPTPTPTPTPTPTPTPTPTPTPTPTPTPTPTPTPTPTPTPTPT). A compositionally biased stretch (pro residues) spans 380-434 (SPTPTPTPTPTPTPTPTPTPTPTPTPTPTPTPTPTPTPTPTPTPTPTPTPTPTPT). Positions 437–446 (YDITYVIFDV) form a repeat. Residues 447–467 (TPSPTPTPTPTPTPTPTPTPT) form a Thr-Pro(N) repeat. Over residues 449 to 465 (SPTPTPTPTPTPTPTPT) the composition is skewed to pro residues.

The chain is Viral protein TPX from Thermoproteus tenax virus 1 (strain VT3) (TTV1).